The chain runs to 461 residues: Steroidogenic factor 1 (461 aa).

Residues 10–85 constitute a DNA-binding region (nuclear receptor); that stretch reads DELCPVCGDK…VGMRLEAVRA (76 aa). An NR C4-type zinc finger spans residues 13–33; it reads CPVCGDKVSGYHYGLLTCESC. An N6-acetyllysine mark is found at lysine 34, lysine 38, and lysine 72. The NR C4-type zinc-finger motif lies at 49 to 73; it reads CTESQSCKIDKTQRKRCPFCRFQKC. A Glycyl lysine isopeptide (Lys-Gly) (interchain with G-Cter in SUMO) cross-link involves residue lysine 119. The segment at 119 to 157 is disordered; that stretch reads KLETGPPMGVPPPPPPAPDYVLPPSLHGPEPKGLAAGPP. Residues 126–136 are compositionally biased toward pro residues; sequence MGVPPPPPPAP. Residue lysine 194 forms a Glycyl lysine isopeptide (Lys-Gly) (interchain with G-Cter in SUMO) linkage. At serine 203 the chain carries Phosphoserine; by CDK7. In terms of domain architecture, NR LBD spans 222-459; that stretch reads NVPELILQLL…NLLIEMLQAK (238 aa). Positions 230 to 461 are important for dimerization; that stretch reads LLQLEPDEDQ…LIEMLQAKQT (232 aa). Positions 341, 436, and 440 each coordinate a 1,2-diacyl-sn-glycero-3-phosphocholine. The a 1,2-diacylglycero-3-phosphoethanolamine site is built by glycine 341, tyrosine 436, and lysine 440.

Belongs to the nuclear hormone receptor family. NR5 subfamily. Binds DNA as a monomer. Interacts with NR0B2 and PPARGC1A. Part of a complex consisting of SFPQ, NONO and NR5A1. Interacts with NCOA2. Interacts with DGKQ and CDK7. Binds to and activated by HIPK3. Acetylation stimulates the transcriptional activity. In terms of processing, sumoylation reduces CDK7-mediated phosphorylation on Ser-203. Post-translationally, phosphorylated on Ser-203 by CDK7. This phosphorylation promotes transcriptional activity. As to expression, high expressed in the adrenal cortex, the ovary, the testis, and the spleen.

It is found in the nucleus. Its function is as follows. Transcriptional activator. Essential for sexual differentiation and formation of the primary steroidogenic tissues. Binds to the Ad4 site found in the promoter region of steroidogenic P450 genes such as CYP11A, CYP11B and CYP21B. Also regulates the AMH/Muellerian inhibiting substance gene as well as the AHCH and STAR genes. 5'-YCAAGGYC-3' and 5'-RRAGGTCA-3' are the consensus sequences for the recognition by NR5A1. The SFPQ-NONO-NR5A1 complex binds to the CYP17 promoter and regulates basal and cAMP-dependent transcriptional activity. Binds phosphatidylcholine. Binds phospholipids with a phosphatidylinositol (PI) headgroup, in particular PI(3,4)P2 and PI(3,4,5)P3. Activated by the phosphorylation of NR5A1 by HIPK3 leading to increased steroidogenic gene expression upon cAMP signaling pathway stimulation. The polypeptide is Steroidogenic factor 1 (NR5A1) (Homo sapiens (Human)).